Consider the following 650-residue polypeptide: Chaperone protein HtpG (650 aa).

An a; substrate-binding region spans residues 1–356; sequence MSTRVETLEF…THDLSLNISR (356 aa). The interval 222 to 245 is disordered; the sequence is AKDRDSNDDGTAESGAGAENAGDR. The interval 357–572 is b; sequence EILQQDRRIQ…TFDMTPALEK (216 aa). A c region spans residues 573 to 650; the sequence is MYRAMGHEMP…LLAERLAEAL (78 aa).

This sequence belongs to the heat shock protein 90 family. Homodimer.

It localises to the cytoplasm. Functionally, molecular chaperone. Has ATPase activity. The sequence is that of Chaperone protein HtpG from Frankia casuarinae (strain DSM 45818 / CECT 9043 / HFP020203 / CcI3).